The chain runs to 192 residues: Ion-translocating oxidoreductase complex subunit B (192 aa).

A hydrophobic region spans residues 1–26; the sequence is MNAFWIAVAAVSLLGLAFGAILGYAS. One can recognise a 4Fe-4S domain in the interval 32 to 91; the sequence is EDDPVVEKIDEILPQSQCGQCGYPGCRPYAEAISCNGEKINRCAPGGEAVMLKIAELLNV. Residues Cys-49, Cys-52, Cys-57, Cys-74, Cys-117, Cys-120, Cys-123, Cys-127, Cys-147, Cys-150, Cys-153, and Cys-157 each coordinate [4Fe-4S] cluster. 4Fe-4S ferredoxin-type domains are found at residues 108–137 and 138–167; these read MVAV…GATR and AMHT…LQPV.

The protein belongs to the 4Fe4S bacterial-type ferredoxin family. RnfB subfamily. The complex is composed of six subunits: RsxA, RsxB, RsxC, RsxD, RsxE and RsxG. [4Fe-4S] cluster serves as cofactor.

It localises to the cell inner membrane. In terms of biological role, part of a membrane-bound complex that couples electron transfer with translocation of ions across the membrane. Required to maintain the reduced state of SoxR. The polypeptide is Ion-translocating oxidoreductase complex subunit B (Escherichia coli O6:H1 (strain CFT073 / ATCC 700928 / UPEC)).